A 149-amino-acid chain; its full sequence is D-aminoacyl-tRNA deacylase (149 aa).

A Gly-cisPro motif, important for rejection of L-amino acids motif is present at residues 137–138 (GP).

It belongs to the DTD family. As to quaternary structure, homodimer.

Its subcellular location is the cytoplasm. The catalysed reaction is glycyl-tRNA(Ala) + H2O = tRNA(Ala) + glycine + H(+). It carries out the reaction a D-aminoacyl-tRNA + H2O = a tRNA + a D-alpha-amino acid + H(+). In terms of biological role, an aminoacyl-tRNA editing enzyme that deacylates mischarged D-aminoacyl-tRNAs. Also deacylates mischarged glycyl-tRNA(Ala), protecting cells against glycine mischarging by AlaRS. Acts via tRNA-based rather than protein-based catalysis; rejects L-amino acids rather than detecting D-amino acids in the active site. By recycling D-aminoacyl-tRNA to D-amino acids and free tRNA molecules, this enzyme counteracts the toxicity associated with the formation of D-aminoacyl-tRNA entities in vivo and helps enforce protein L-homochirality. The polypeptide is D-aminoacyl-tRNA deacylase (Thioalkalivibrio sulfidiphilus (strain HL-EbGR7)).